Here is a 420-residue protein sequence, read N- to C-terminus: UDP-N-acetyl-D-mannosamine dehydrogenase (420 aa).

Residues Tyr13, Ile14, Asp33, Thr85, and Thr126 each contribute to the NAD(+) site. Positions 160, 161, 212, 216, 219, 250, 252, and 263 each coordinate UDP-N-acetyl-alpha-D-mannosaminouronate. Lys212 (proton donor/acceptor) is an active-site residue. The active-site Nucleophile is the Cys266. UDP-N-acetyl-alpha-D-mannosaminouronate-binding residues include Phe330 and Lys331. Residue Arg338 participates in NAD(+) binding. Lys416 lines the UDP-N-acetyl-alpha-D-mannosaminouronate pocket.

This sequence belongs to the UDP-glucose/GDP-mannose dehydrogenase family. WecC subfamily. As to quaternary structure, homodimer.

The catalysed reaction is UDP-N-acetyl-alpha-D-mannosamine + 2 NAD(+) + H2O = UDP-N-acetyl-alpha-D-mannosaminouronate + 2 NADH + 3 H(+). It participates in bacterial outer membrane biogenesis; enterobacterial common antigen biosynthesis. Functionally, catalyzes the four-electron oxidation of UDP-N-acetyl-D-mannosamine (UDP-ManNAc), reducing NAD(+) and releasing UDP-N-acetylmannosaminuronic acid (UDP-ManNAcA). This is UDP-N-acetyl-D-mannosamine dehydrogenase from Salmonella typhimurium (strain LT2 / SGSC1412 / ATCC 700720).